Consider the following 336-residue polypeptide: Dihydroorotate dehydrogenase (quinone) (336 aa).

FMN is bound by residues 62 to 66 (AGLDK) and T86. Residue K66 coordinates substrate. Position 111-115 (111-115 (NRMGF)) interacts with substrate. Residues N139 and N172 each coordinate FMN. Residue N172 participates in substrate binding. Residue S175 is the Nucleophile of the active site. A substrate-binding site is contributed by N177. The FMN site is built by K217 and T245. 246 to 247 (NT) lines the substrate pocket. FMN-binding positions include G268, G297, and 318–319 (YS).

The protein belongs to the dihydroorotate dehydrogenase family. Type 2 subfamily. Monomer. It depends on FMN as a cofactor.

The protein resides in the cell membrane. It carries out the reaction (S)-dihydroorotate + a quinone = orotate + a quinol. It functions in the pathway pyrimidine metabolism; UMP biosynthesis via de novo pathway; orotate from (S)-dihydroorotate (quinone route): step 1/1. Catalyzes the conversion of dihydroorotate to orotate with quinone as electron acceptor. The protein is Dihydroorotate dehydrogenase (quinone) of Proteus mirabilis (strain HI4320).